An 853-amino-acid chain; its full sequence is Transforming growth factor beta receptor type 3 (853 aa).

The N-terminal stretch at 1–23 (MAVTSHHMIPVMVVLMSACLATA) is a signal peptide. Residues 24–789 (GPEPSTRCEL…IFHGLDTLTV (766 aa)) lie on the Extracellular side of the membrane. 3 N-linked (GlcNAc...) asparagine glycosylation sites follow: N37, N144, and N493. C55 and C200 form a disulfide bridge. Positions 456 to 730 (KCDHEKMVVA…PRCVTPDDAC (275 aa)) constitute a ZP domain. The interval 530-559 (SPGDSSGWPDGYEDLESGDNGFPGDGDEGE) is disordered. S535 and S546 each carry an O-linked (Xyl...) (glycosaminoglycan) serine glycan. N-linked (GlcNAc...) asparagine glycans are attached at residues N572, N591, and N698. 3 disulfides stabilise this stretch: C640-C706, C661-C730, and C711-C723. The interval 737 to 751 (MIWTMMQNKKTFTKP) is interaction with TGF-beta ligand. A helical membrane pass occupies residues 790–811 (MGIAFAAFVIGALLTGALWYIY). Residues 812–853 (SHTGETARRQQVPTSPPASENSSAAHSIGSTQSTPCSSSSTA) lie on the Cytoplasmic side of the membrane. Residues 820 to 836 (RQQVPTSPPASENSSAA) are compositionally biased toward polar residues. Residues 820-853 (RQQVPTSPPASENSSAAHSIGSTQSTPCSSSSTA) form a disordered region. Residues 838–853 (SIGSTQSTPCSSSSTA) show a composition bias toward low complexity. T842 carries the phosphothreonine modification.

Forms homodimers and homooligomers. Interacts with DYNLT4. Interacts with integrin ITGA5:ITGB1; this interaction promotes the internalization and trafficking of ITGA5:ITGB1 into endocytic vesicles. Interacts with TGFB1, BMP2, BMP5, BMP7 or GDF5 and inhibin A via the ligand binding domains. Interacts with ALK3/BMPR1A; this interaction results in the cell surface retention of BMPR1A. Interacts with ALK6/BMPR1B; this interaction enhances BMPR1B-mediated stimulation of the BMP signaling pathway. Interacts with the scaffolding protein beta-arrestin2/ARRB2; this interaction mediates internalization of TGFBR3 and thus regulates migration, actin cytoskeleton and activation of CDC42. In terms of processing, extensively modified by glycosaminoglycan groups (GAG). Post-translationally, phosphorylated in the cytoplasmic domain by the type II receptor TGFBR2 at THR-842 to mediate recruitment of ARRB2 and subsequent internalization of TGFBR2 and TGFBR3.

The protein resides in the cell membrane. Its subcellular location is the secreted. It localises to the extracellular space. The protein localises to the extracellular matrix. In terms of biological role, cell surface receptor that regulates diverse cellular processes including cell proliferation, differentiation, migration, and apoptosis. Initiates BMP, inhibin, and TGF-beta signaling pathways by interacting with different ligands including TGFB1, BMP2, BMP5, BMP7 or GDF5. Alternatively, acts as a cell surface coreceptor for BMP ligands, serving to enhance ligand binding by differentially regulating BMPR1A/ALK3 and BMPR1B/ALK6 receptor trafficking. Promotes epithelial cell adhesion, focal adhesion formation and integrin signaling during epithelial cell spreading on fibronectin. By interacting with the scaffolding protein beta-arrestin2/ARRB2, regulates migration or actin cytoskeleton and promotes the activation of CDC42 as well as the inhibition of NF-kappa-B. In gonadotrope cells, acts as an inhibin A coreceptor and regulates follicle-stimulating hormone (FSH) levels and female fertility. Plays a role in the inhibition of directed and random cell migration in epithelial cells by altering the actin cytoskeletal organization. Participates in epithelial-mesenchymal transformation (EMT) upon binding to BMP2 or TGFB2, by activating the PAR6/SMURF1/RHOA pathway. The chain is Transforming growth factor beta receptor type 3 (Tgfbr3) from Rattus norvegicus (Rat).